Reading from the N-terminus, the 486-residue chain is Inosine-5'-monophosphate dehydrogenase (486 aa).

2 consecutive CBS domains span residues 99–154 and 156–215; these read IVED…LVKE and MTKE…VRDE. NAD(+)-binding positions include Asp247 and 294–296; that span reads GIG. Residues Gly296 and Gly298 each contribute to the K(+) site. Residue Ser299 participates in IMP binding. Residue Cys301 participates in K(+) binding. Residue Cys301 is the Thioimidate intermediate of the active site. IMP-binding positions include 334–336, 357–358, and 381–385; these read DGG, GN, and YRGMG. Arg397 (proton acceptor) is an active-site residue. Glu412 serves as a coordination point for IMP. The K(+) site is built by Glu466, Ser467, and His468.

It belongs to the IMPDH/GMPR family. In terms of assembly, homotetramer. K(+) serves as cofactor.

The catalysed reaction is IMP + NAD(+) + H2O = XMP + NADH + H(+). Its pathway is purine metabolism; XMP biosynthesis via de novo pathway; XMP from IMP: step 1/1. Mycophenolic acid (MPA) is a non-competitive inhibitor that prevents formation of the closed enzyme conformation by binding to the same site as the amobile flap. In contrast, mizoribine monophosphate (MZP) is a competitive inhibitor that induces the closed conformation. MPA is a potent inhibitor of mammalian IMPDHs but a poor inhibitor of the bacterial enzymes. MZP is a more potent inhibitor of bacterial IMPDH. Functionally, catalyzes the conversion of inosine 5'-phosphate (IMP) to xanthosine 5'-phosphate (XMP), the first committed and rate-limiting step in the de novo synthesis of guanine nucleotides, and therefore plays an important role in the regulation of cell growth. This Pyrococcus horikoshii (strain ATCC 700860 / DSM 12428 / JCM 9974 / NBRC 100139 / OT-3) protein is Inosine-5'-monophosphate dehydrogenase.